The primary structure comprises 186 residues: Elongation factor P (186 aa).

It belongs to the elongation factor P family.

It localises to the cytoplasm. The protein operates within protein biosynthesis; polypeptide chain elongation. In terms of biological role, involved in peptide bond synthesis. Stimulates efficient translation and peptide-bond synthesis on native or reconstituted 70S ribosomes in vitro. Probably functions indirectly by altering the affinity of the ribosome for aminoacyl-tRNA, thus increasing their reactivity as acceptors for peptidyl transferase. This Neisseria gonorrhoeae (strain ATCC 700825 / FA 1090) protein is Elongation factor P.